A 168-amino-acid chain; its full sequence is Peptidoglycan-associated lipoprotein (168 aa).

A signal peptide spans 1–24; sequence MGRIAALTRNPVMIALVAMLAIAG. The N-palmitoyl cysteine moiety is linked to residue Cys25. The S-diacylglycerol cysteine moiety is linked to residue Cys25. Residues 50–167 form the OmpA-like domain; it reads AQDFTVNIGD…RAVTTLSGAG (118 aa).

This sequence belongs to the Pal lipoprotein family. In terms of assembly, the Tol-Pal system is composed of five core proteins: the inner membrane proteins TolA, TolQ and TolR, the periplasmic protein TolB and the outer membrane protein Pal. They form a network linking the inner and outer membranes and the peptidoglycan layer.

It localises to the cell outer membrane. In terms of biological role, part of the Tol-Pal system, which plays a role in outer membrane invagination during cell division and is important for maintaining outer membrane integrity. This chain is Peptidoglycan-associated lipoprotein, found in Mesorhizobium japonicum (strain LMG 29417 / CECT 9101 / MAFF 303099) (Mesorhizobium loti (strain MAFF 303099)).